Reading from the N-terminus, the 331-residue chain is Flagellar P-ring protein (331 aa).

A signal peptide spans 1–25; the sequence is MKKRLAVLLVIVLTITFSFSVTTRI.

This sequence belongs to the FlgI family. The basal body constitutes a major portion of the flagellar organelle and consists of four rings (L,P,S, and M) mounted on a central rod.

The protein resides in the periplasm. Its subcellular location is the bacterial flagellum basal body. Its function is as follows. Assembles around the rod to form the L-ring and probably protects the motor/basal body from shearing forces during rotation. This is Flagellar P-ring protein from Thermotoga petrophila (strain ATCC BAA-488 / DSM 13995 / JCM 10881 / RKU-1).